Consider the following 413-residue polypeptide: CCA-adding enzyme (413 aa).

Residues Ser42 and Lys45 each coordinate ATP. 2 residues coordinate CTP: Ser42 and Lys45. Mg(2+)-binding residues include Asp54, Asp56, and Asp107. ATP-binding residues include His130, Lys150, and Tyr159. Residues His130, Lys150, and Tyr159 each coordinate CTP.

It belongs to the tRNA nucleotidyltransferase/poly(A) polymerase family. Archaeal CCA-adding enzyme subfamily. In terms of assembly, homodimer. Mg(2+) serves as cofactor.

It carries out the reaction a tRNA precursor + 2 CTP + ATP = a tRNA with a 3' CCA end + 3 diphosphate. It catalyses the reaction a tRNA with a 3' CCA end + 2 CTP + ATP = a tRNA with a 3' CCACCA end + 3 diphosphate. Functionally, catalyzes the addition and repair of the essential 3'-terminal CCA sequence in tRNAs without using a nucleic acid template. Adds these three nucleotides in the order of C, C, and A to the tRNA nucleotide-73, using CTP and ATP as substrates and producing inorganic pyrophosphate. tRNA 3'-terminal CCA addition is required both for tRNA processing and repair. Also involved in tRNA surveillance by mediating tandem CCA addition to generate a CCACCA at the 3' terminus of unstable tRNAs. While stable tRNAs receive only 3'-terminal CCA, unstable tRNAs are marked with CCACCA and rapidly degraded. This is CCA-adding enzyme from Sulfurisphaera tokodaii (strain DSM 16993 / JCM 10545 / NBRC 100140 / 7) (Sulfolobus tokodaii).